The chain runs to 272 residues: Putative MgpC-like protein MPN_102 (272 aa).

It belongs to the MgpC family.

The protein is Putative MgpC-like protein MPN_102 of Mycoplasma pneumoniae (strain ATCC 29342 / M129 / Subtype 1) (Mycoplasmoides pneumoniae).